The primary structure comprises 279 residues: 32 kDa beta-galactoside-binding lectin (279 aa).

Galectin domains follow at residues 13 to 144 (YRSV…VHWG) and 152 to 279 (YESG…IQIQ). 213 to 219 (WGNEERE) contacts a beta-D-galactoside.

Post-translationally, the N-terminus is blocked.

Its function is as follows. Binds galactose. This chain is 32 kDa beta-galactoside-binding lectin (lec-1), found in Caenorhabditis elegans.